An 890-amino-acid polypeptide reads, in one-letter code: Alanine--tRNA ligase (890 aa).

Zn(2+) is bound by residues histidine 569, histidine 573, cysteine 671, and histidine 675.

It belongs to the class-II aminoacyl-tRNA synthetase family. The cofactor is Zn(2+).

The protein localises to the cytoplasm. It catalyses the reaction tRNA(Ala) + L-alanine + ATP = L-alanyl-tRNA(Ala) + AMP + diphosphate. Catalyzes the attachment of alanine to tRNA(Ala) in a two-step reaction: alanine is first activated by ATP to form Ala-AMP and then transferred to the acceptor end of tRNA(Ala). Also edits incorrectly charged Ser-tRNA(Ala) and Gly-tRNA(Ala) via its editing domain. In Synechococcus sp. (strain CC9902), this protein is Alanine--tRNA ligase.